Consider the following 437-residue polypeptide: Probable N-acetylmuramidase (437 aa).

A signal peptide spans 1-57 (MPVSRVKVKNRHLKKKTKKPLAFYKPTTKFVGAVLIAGTLTTTHELLLQQTSPMVQA). Disordered regions lie at residues 217-244 (SSAGNTNSGGSTTTNTNNNSGTNSSSTT), 291-319 (SSTNSGGSNNSASTTPTTSVTPAKPASQT), and 367-392 (ATSNPSTGSGSTATNNSNSTSSNSNA). The region spanning 243–286 (TTYTVKSGDTLWGISQRYGISVAQIQSANNLKSTIIYIGQKLLL) is the LysM 1 domain. Residues 291–317 (SSTNSGGSNNSASTTPTTSVTPAKPAS) are compositionally biased toward low complexity. Residues 319–362 (TSVKVKSGDTLWALSVKYKTSIAQLKSWNHLSSDTIYIGQNLIV) enclose the LysM 2 domain. The region spanning 393-436 (SIHKVVKGDTLWGLSQKSGSPIASIKAWNHLSSDTILIGQYLRI) is the LysM 3 domain.

It belongs to the glycosyl hydrolase 73 family.

It is found in the secreted. The catalysed reaction is Hydrolysis of (1-&gt;4)-beta-linkages between N-acetylmuramic acid and N-acetyl-D-glucosamine residues in a peptidoglycan and between N-acetyl-D-glucosamine residues in chitodextrins.. In terms of biological role, hydrolyzes the cell wall of L.lactis and M.lysodeikticus. Required for cell separation during growth. This is Probable N-acetylmuramidase (acmA) from Lactococcus lactis subsp. cremoris (Streptococcus cremoris).